The following is a 70-amino-acid chain: MIMRMTLTLFVLVVMTAASASGDALTEAKRVPYCGQTGAECYSWCKEQHLIRCCDFVKYVGMNPPADKCR.

Positions 1–22 (MIMRMTLTLFVLVVMTAASASG) are cleaved as a signal peptide. Residues 23 to 30 (DALTEAKR) constitute a propeptide that is removed on maturation. Cystine bridges form between Cys34-Cys41, Cys45-Cys53, and Cys54-Cys69.

The protein belongs to the conotoxin K superfamily. Expressed by the venom duct.

It is found in the secreted. Probable neurotoxin. This is Conotoxin Im23.4 from Conus imperialis (Imperial cone).